The following is a 480-amino-acid chain: Gasdermin-C3 (480 aa).

Residues 1–226 (MGYSFDRASK…TCVILPSATK (226 aa)) are triggers pyroptosis.

This sequence belongs to the gasdermin family. In terms of assembly, homooligomer; homooligomeric ring-shaped pore complex containing 27-28 subunits when inserted in the membrane. Cleavage by CASP8 relieves autoinhibition by releasing the N-terminal moiety (Gasdermin-C3, N-terminal) that initiates pyroptosis. Post-translationally, palmitoylated.

The protein resides in the cytoplasm. Its subcellular location is the cytosol. The protein localises to the cell membrane. With respect to regulation, the full-length protein before cleavage is inactive: intramolecular interactions between N- and C-terminal domains mediate autoinhibition in the absence of activation signal. The intrinsic pyroptosis-inducing activity is carried by the released N-terminal moiety (Gasdermin-C3, N-terminal) following cleavage by caspase CASP8. Its function is as follows. This form constitutes the precursor of the pore-forming protein: upon cleavage, the released N-terminal moiety (Gasdermin-C3, N-terminal) binds to membranes and forms pores, triggering pyroptosis. In terms of biological role, pore-forming protein that causes membrane permeabilization and pyroptosis. Produced by the cleavage of gasdermin-C3 by caspase CASP8 in response to death signals. After cleavage, moves to the plasma membrane where it strongly binds to membrane inner leaflet lipids. Homooligomerizes within the membrane and forms pores of 10-15 nanometers (nm) of inner diameter, triggering pyroptosis. This is Gasdermin-C3 from Mus musculus (Mouse).